The primary structure comprises 64 residues: Large ribosomal subunit protein bL32 (64 aa).

Positions 1–10 (MAVPKRKTTP) are enriched in basic residues. The interval 1-22 (MAVPKRKTTPSKRDMRRANHDK) is disordered. The segment covering 11-22 (SKRDMRRANHDK) has biased composition (basic and acidic residues).

It belongs to the bacterial ribosomal protein bL32 family.

The sequence is that of Large ribosomal subunit protein bL32 from Sorangium cellulosum (strain So ce56) (Polyangium cellulosum (strain So ce56)).